Here is a 185-residue protein sequence, read N- to C-terminus: 3-hexulose-6-phosphate isomerase (185 aa).

One can recognise an SIS domain in the interval 29-172; that stretch reads LADHILSSHQ…ILKLMEKKGL (144 aa). Substrate contacts are provided by residues S47 and 86-91; that span reads SGSGET. E152 acts as the Proton acceptor in catalysis.

Belongs to the SIS family. PHI subfamily. Homotetramer.

It catalyses the reaction D-arabino-hex-3-ulose 6-phosphate = beta-D-fructose 6-phosphate. It participates in one-carbon metabolism; formaldehyde assimilation via RuMP pathway; D-fructose 6-phosphate from D-ribulose 5-phosphate and formaldehyde: step 2/2. Functionally, catalyzes the isomerization between 3-hexulose 6-phosphate and fructose 6-phosphate. Together with HxlA, may act as a formaldehyde detoxification system. The chain is 3-hexulose-6-phosphate isomerase (hxlB) from Bacillus subtilis (strain 168).